Reading from the N-terminus, the 431-residue chain is Serine--tRNA ligase (431 aa).

238–240 provides a ligand contact to L-serine; the sequence is TSE. 269 to 271 lines the ATP pocket; that stretch reads RSE. L-serine is bound at residue E292. 356–359 contacts ATP; sequence EISS. S391 contacts L-serine.

The protein belongs to the class-II aminoacyl-tRNA synthetase family. Type-1 seryl-tRNA synthetase subfamily. In terms of assembly, homodimer. The tRNA molecule binds across the dimer.

It is found in the cytoplasm. The enzyme catalyses tRNA(Ser) + L-serine + ATP = L-seryl-tRNA(Ser) + AMP + diphosphate + H(+). It carries out the reaction tRNA(Sec) + L-serine + ATP = L-seryl-tRNA(Sec) + AMP + diphosphate + H(+). It functions in the pathway aminoacyl-tRNA biosynthesis; selenocysteinyl-tRNA(Sec) biosynthesis; L-seryl-tRNA(Sec) from L-serine and tRNA(Sec): step 1/1. Functionally, catalyzes the attachment of serine to tRNA(Ser). Is also able to aminoacylate tRNA(Sec) with serine, to form the misacylated tRNA L-seryl-tRNA(Sec), which will be further converted into selenocysteinyl-tRNA(Sec). This Leptothrix cholodnii (strain ATCC 51168 / LMG 8142 / SP-6) (Leptothrix discophora (strain SP-6)) protein is Serine--tRNA ligase.